A 588-amino-acid polypeptide reads, in one-letter code: Catechol oxidase B, chloroplastic (588 aa).

Residues 1–88 (SSSSTTTIPL…AANLAPLASA (88 aa)) constitute a chloroplast transit peptide. 2 disulfides stabilise this stretch: cysteine 99/cysteine 115 and cysteine 114/cysteine 181. Cu cation contacts are provided by histidine 180, histidine 198, histidine 207, histidine 329, histidine 333, and histidine 364. Residues 184–198 (CNGAYKVGGKELQVH) constitute a cross-link (2'-(S-cysteinyl)-histidine (Cys-His)).

The protein belongs to the tyrosinase family. Cu(2+) is required as a cofactor.

It localises to the plastid. The protein localises to the chloroplast thylakoid lumen. The catalysed reaction is 2 catechol + O2 = 2 1,2-benzoquinone + 2 H2O. In terms of biological role, catalyzes the oxidation of mono- and o-diphenols to o-diquinones. The sequence is that of Catechol oxidase B, chloroplastic from Solanum tuberosum (Potato).